A 419-amino-acid polypeptide reads, in one-letter code: Protein FAM217A (419 aa).

Disordered stretches follow at residues 1–23 (MGRKSNESCSANPHSSSISQENL), 100–119 (DKRNSSVEENVTDESDLSES), 234–298 (PSSS…SRSL), and 362–388 (PIPLSFPENPREEVKVPRTKKKCHRKS). The span at 7–23 (ESCSANPHSSSISQENL) shows a compositional bias: polar residues. Residues 284 to 298 (SLSTAGKSKSNSRSL) are compositionally biased toward polar residues. Basic residues predominate over residues 378 to 388 (PRTKKKCHRKS).

It belongs to the FAM217 family.

The chain is Protein FAM217A (Fam217a) from Rattus norvegicus (Rat).